A 269-amino-acid chain; its full sequence is Formamidopyrimidine-DNA glycosylase (269 aa).

The active-site Schiff-base intermediate with DNA is proline 2. Residue glutamate 3 is the Proton donor of the active site. The Proton donor; for beta-elimination activity role is filled by lysine 57. DNA is bound by residues histidine 90, arginine 109, and lysine 150. The segment at 235 to 269 adopts an FPG-type zinc-finger fold; that stretch reads QVYGRKGEPCRVCGTPIVATKHAQRATFYCRHCQK. The Proton donor; for delta-elimination activity role is filled by arginine 259.

Belongs to the FPG family. Monomer. Zn(2+) is required as a cofactor.

The catalysed reaction is Hydrolysis of DNA containing ring-opened 7-methylguanine residues, releasing 2,6-diamino-4-hydroxy-5-(N-methyl)formamidopyrimidine.. It carries out the reaction 2'-deoxyribonucleotide-(2'-deoxyribose 5'-phosphate)-2'-deoxyribonucleotide-DNA = a 3'-end 2'-deoxyribonucleotide-(2,3-dehydro-2,3-deoxyribose 5'-phosphate)-DNA + a 5'-end 5'-phospho-2'-deoxyribonucleoside-DNA + H(+). Its function is as follows. Involved in base excision repair of DNA damaged by oxidation or by mutagenic agents. Acts as a DNA glycosylase that recognizes and removes damaged bases. Has a preference for oxidized purines, such as 7,8-dihydro-8-oxoguanine (8-oxoG). Has AP (apurinic/apyrimidinic) lyase activity and introduces nicks in the DNA strand. Cleaves the DNA backbone by beta-delta elimination to generate a single-strand break at the site of the removed base with both 3'- and 5'-phosphates. In Salmonella paratyphi C (strain RKS4594), this protein is Formamidopyrimidine-DNA glycosylase.